Consider the following 265-residue polypeptide: Urease accessory protein UreH (265 aa).

It belongs to the UreD family. UreH, UreF and UreG form a complex that acts as a GTP-hydrolysis-dependent molecular chaperone, activating the urease apoprotein by helping to assemble the nickel containing metallocenter of UreC. The UreE protein probably delivers the nickel.

The protein resides in the cytoplasm. In terms of biological role, required for maturation of urease via the functional incorporation of the urease nickel metallocenter. The sequence is that of Urease accessory protein UreH from Helicobacter pylori (strain J99 / ATCC 700824) (Campylobacter pylori J99).